The chain runs to 111 residues: uncharacterized protein (111 aa).

The helical transmembrane segment at 48 to 70 threads the bilayer; the sequence is LFLVPFPASFTRWLTFLFHLVIY.

It is found in the membrane. This is an uncharacterized protein from Saccharomyces cerevisiae (strain ATCC 204508 / S288c) (Baker's yeast).